Consider the following 396-residue polypeptide: Ribosomal RNA large subunit methyltransferase I (396 aa).

The PUA domain occupies 2 to 81 (SVRLVLAKGR…ESIDIAFFSR (80 aa)).

The protein belongs to the methyltransferase superfamily. RlmI family.

It localises to the cytoplasm. The enzyme catalyses cytidine(1962) in 23S rRNA + S-adenosyl-L-methionine = 5-methylcytidine(1962) in 23S rRNA + S-adenosyl-L-homocysteine + H(+). Its function is as follows. Specifically methylates the cytosine at position 1962 (m5C1962) of 23S rRNA. In Shigella flexneri, this protein is Ribosomal RNA large subunit methyltransferase I.